A 150-amino-acid polypeptide reads, in one-letter code: Large ribosomal subunit protein bL9 (150 aa).

Belongs to the bacterial ribosomal protein bL9 family.

Its function is as follows. Binds to the 23S rRNA. This Latilactobacillus sakei subsp. sakei (strain 23K) (Lactobacillus sakei subsp. sakei) protein is Large ribosomal subunit protein bL9.